The primary structure comprises 88 residues: Small ribosomal subunit protein bS20 (88 aa).

Disordered stretches follow at residues 1–23 (MANSPQARKRARQAENRRQHNAA) and 69–88 (PNKAARHKSRLNTKIKAMAA). Basic residues predominate over residues 69 to 81 (PNKAARHKSRLNT).

This sequence belongs to the bacterial ribosomal protein bS20 family.

Its function is as follows. Binds directly to 16S ribosomal RNA. This is Small ribosomal subunit protein bS20 from Alcanivorax borkumensis (strain ATCC 700651 / DSM 11573 / NCIMB 13689 / SK2).